Here is a 116-residue protein sequence, read N- to C-terminus: Nucleoid-associated protein PMM0020 (116 aa).

The span at 87–98 shows a compositional bias: basic and acidic residues; that stretch reads ESSTTTMKERMN. The segment at 87-116 is disordered; it reads ESSTTTMKERMNDLTGGLNLNLPGLDNNDS. The segment covering 99–116 has biased composition (low complexity); sequence DLTGGLNLNLPGLDNNDS.

It belongs to the YbaB/EbfC family. In terms of assembly, homodimer.

The protein resides in the cytoplasm. It is found in the nucleoid. Binds to DNA and alters its conformation. May be involved in regulation of gene expression, nucleoid organization and DNA protection. This Prochlorococcus marinus subsp. pastoris (strain CCMP1986 / NIES-2087 / MED4) protein is Nucleoid-associated protein PMM0020.